A 1212-amino-acid chain; its full sequence is Metabotropic glutamate receptor 5 (1212 aa).

The signal sequence occupies residues 1-20 (MVLLLILSVLLLKEDVRGSA). Over 22–580 (SSERRVVAHM…QYLRWGDPEP (559 aa)) the chain is Extracellular. A disulfide bridge connects residues Cys-57 and Cys-99. An L-glutamate-binding site is contributed by Tyr-64. A glycan (N-linked (GlcNAc...) asparagine) is linked at Asn-88. L-glutamate contacts are provided by residues Ser-152 and 173-175 (SAT). An N-linked (GlcNAc...) asparagine glycan is attached at Asn-210. Position 223 (Tyr-223) interacts with L-glutamate. 8 cysteine pairs are disulfide-bonded: Cys-241-Cys-530, Cys-276-Cys-278, Cys-365-Cys-381, Cys-419-Cys-426, Cys-511-Cys-531, Cys-515-Cys-534, Cys-537-Cys-549, and Cys-552-Cys-565. Asp-305 contributes to the L-glutamate binding site. Residues Asn-378 and Asn-382 are each glycosylated (N-linked (GlcNAc...) asparagine). An L-glutamate-binding site is contributed by Lys-396. Residue Asn-445 is glycosylated (N-linked (GlcNAc...) asparagine). Residues 581–603 (IAAVVFACLGLLATLFVTVVFII) form a helical membrane-spanning segment. Topologically, residues 604–613 (YRDTPVVKSS) are cytoplasmic. A helical transmembrane segment spans residues 614 to 636 (SRELCYIILAGICLGYLCTFCLI). The Extracellular segment spans residues 637–644 (AKPKQIYC). An intrachain disulfide couples Cys-644 to Cys-733. Residues 645 to 667 (YLQRIGIGLSPAMSYSALVTKTN) traverse the membrane as a helical segment. Residues 668–693 (RIARILAGSKKKICTKKPRFMSACAQ) lie on the Cytoplasmic side of the membrane. A helical transmembrane segment spans residues 694–714 (LVIAFILICIQLGIIVALFIM). The Extracellular segment spans residues 715–737 (EPPDIMHDYPSIREVYLICNTTN). The N-linked (GlcNAc...) asparagine glycan is linked to Asn-734. Residues 738-759 (LGVVTPLGYNGLLILSCTFYAF) form a helical membrane-spanning segment. The Cytoplasmic segment spans residues 760–772 (KTRNVPANFNEAK). The helical transmembrane segment at 773–795 (YIAFTMYTTCIIWLAFVPIYFGS) threads the bilayer. Residues 796–798 (NYK) lie on the Extracellular side of the membrane. The chain crosses the membrane as a helical span at residues 799-820 (IITMCFSVSLSATVALGCMFVP). At 821 to 1212 (KVYIILAKPE…RDYTQSSSSL (392 aa)) the chain is on the cytoplasmic side. The residue at position 861 (Ser-861) is a Phosphoserine. 2 positions are modified to omega-N-methylarginine: Arg-869 and Arg-925. Disordered stretches follow at residues 937–971 (INKKENPNQTAVIKPFPKSTESRGLGAGAGAGGSA), 1010–1056 (FPAP…SQGS), and 1132–1191 (GAQA…ALCI). The span at 961–971 (LGAGAGAGGSA) shows a compositional bias: gly residues. A phosphoserine mark is found at Ser-1018 and Ser-1020. A compositionally biased stretch (low complexity) spans 1132–1153 (GAQAAGDAARESPAAGPEAAAA). The segment covering 1174–1185 (DSGSTTPNSPVS) has biased composition (polar residues).

Belongs to the G-protein coupled receptor 3 family. The PPXXF motif binds HOMER1, HOMER2 and HOMER3. Interacts with SIAH1, RYR1, RYR2, ITPR1, SHANK1, SHANK3 and TAMALIN. Interacts with NCDN. Isoform 2 interacts with NECAB2. Interacts with CAMK2A.

The protein resides in the cell membrane. In terms of biological role, G-protein coupled receptor for glutamate. Ligand binding causes a conformation change that triggers signaling via guanine nucleotide-binding proteins (G proteins) and modulates the activity of down-stream effectors. Signaling activates a phosphatidylinositol-calcium second messenger system and generates a calcium-activated chloride current. Plays an important role in the regulation of synaptic plasticity and the modulation of the neural network activity. The chain is Metabotropic glutamate receptor 5 (GRM5) from Homo sapiens (Human).